The chain runs to 282 residues: Probable endonuclease 4 (282 aa).

Residues histidine 69, histidine 109, glutamate 144, aspartate 178, histidine 181, histidine 215, aspartate 228, histidine 230, and glutamate 260 each contribute to the Zn(2+) site.

Belongs to the AP endonuclease 2 family. Zn(2+) serves as cofactor.

The catalysed reaction is Endonucleolytic cleavage to 5'-phosphooligonucleotide end-products.. Its function is as follows. Endonuclease IV plays a role in DNA repair. It cleaves phosphodiester bonds at apurinic or apyrimidinic (AP) sites, generating a 3'-hydroxyl group and a 5'-terminal sugar phosphate. In Thermosipho africanus (strain TCF52B), this protein is Probable endonuclease 4.